A 720-amino-acid chain; its full sequence is Asp/Glu-specific dipeptidyl-peptidase (720 aa).

Residues 1 to 21 form the signal peptide; sequence MKKRLLLPLFAALCLSQIAHA. Cys69 and Cys86 are disulfide-bonded. Residues His85, Asp227, and Ser655 each act as charge relay system in the active site.

It belongs to the peptidase S46 family. In terms of assembly, homodimer.

The protein localises to the cell surface. With respect to regulation, enzyme activity is completely blocked by diisopropyl-fluorophosphates, moderately by phenylmethylsulfonyl fluoride (PMSF) and 4-(2-methyl)benzenesulfonyl fluoride, and slightly by pepstatin in vitro. Catalyzes the removal of dipeptides from the N-terminus of oligopeptides. Shows a strict specificity for acidic residues (Asp or Glu) in the P1 position, and has a hydrophobic residue preference at the P2 position. Preferentially cleaves the synthetic substrate Leu-Asp-methylcoumaryl-7-amide (Leu-Asp-MCA) as compared to Leu-Glu-MCA. Is involved in amino acid metabolism and bacterial growth of asaccharolytic P.gingivalis, that utilizes amino acids from extracellular proteinaceous nutrients as energy and carbon sources. This Porphyromonas gingivalis (strain ATCC 33277 / DSM 20709 / CIP 103683 / JCM 12257 / NCTC 11834 / 2561) protein is Asp/Glu-specific dipeptidyl-peptidase.